The sequence spans 23 residues: Alyteserin-1c (23 aa).

Serine 23 is modified (serine amide).

Expressed by the skin glands.

The protein resides in the secreted. It is found in the target cell membrane. In terms of biological role, antibacterial peptide with amphipathic alpha-helical structure that shows selective growth-inhibitory activity against Gram-negative bacteria but low hemolytic activity against human erythrocytes (LC(50)=145-220 uM). It is moderately active against the Gram-negative bacteria E.coli (MIC=25 uM), K.pneumoniae (MIC=50 uM), P.aeruginosa (MIC=25 uM), A.baumannii (MIC=6 uM), and is weaky active against the Gram-positive S.aureus (MIC=100-250 uM). In Alytes obstetricans (Common midwife toad), this protein is Alyteserin-1c.